We begin with the raw amino-acid sequence, 276 residues long: 5'-nucleotidase SurE (276 aa).

The a divalent metal cation site is built by D14, D15, S46, and N104.

The protein belongs to the SurE nucleotidase family. The cofactor is a divalent metal cation.

It localises to the cytoplasm. It catalyses the reaction a ribonucleoside 5'-phosphate + H2O = a ribonucleoside + phosphate. Functionally, nucleotidase that shows phosphatase activity on nucleoside 5'-monophosphates. The sequence is that of 5'-nucleotidase SurE from Crocosphaera subtropica (strain ATCC 51142 / BH68) (Cyanothece sp. (strain ATCC 51142)).